The following is an 842-amino-acid chain: Unconventional myosin-Ia (842 aa).

The Myosin motor domain occupies 1–686 (GVEDLILLEP…TLFYLEEQRR (686 aa)). 93–100 (GESGAGKT) provides a ligand contact to ATP. The segment at 563–585 (VAILMKNLYSKNPNYIRCIKPND) is actin-binding. 3 consecutive IQ domains span residues 689–712 (LQQLATLIQKVYRGWRCRTHYQQM), 713–733 (RKSQILLSAWFRGNKQKKHYG), and 735–764 (IRSSVLLIQAFVRGWKARKNYRKYFRSGAR).

This sequence belongs to the TRAFAC class myosin-kinesin ATPase superfamily. Myosin family. Phosphorylated by ALPK1.

Functionally, involved in directing the movement of organelles along actin filaments. The sequence is that of Unconventional myosin-Ia (Myo1a) from Rattus norvegicus (Rat).